We begin with the raw amino-acid sequence, 508 residues long: Probable G-protein coupled receptor 101 (508 aa).

Residues Met1–Ser35 lie on the Extracellular side of the membrane. 2 N-linked (GlcNAc...) asparagine glycosylation sites follow: Asn7 and Asn13. A helical membrane pass occupies residues Thr36–Leu56. Topologically, residues Gln57–Arg68 are cytoplasmic. The helical transmembrane segment at Phe69–Val89 threads the bilayer. The Extracellular segment spans residues Ala90 to Ala106. Cysteines 104 and 182 form a disulfide. Residues Leu107–Val127 traverse the membrane as a helical segment. Over Asp128–Tyr149 the chain is Cytoplasmic. A helical membrane pass occupies residues Leu150–Trp170. Topologically, residues Gly171–Ser196 are extracellular. A helical membrane pass occupies residues Val197–Cys217. Residues Ala218 to Lys399 are Cytoplasmic-facing. The interval Asn244 to Arg338 is disordered. Composition is skewed to basic and acidic residues over residues Ala250–Glu288 and Met318–Arg338. A helical transmembrane segment spans residues Val400–Val420. The Extracellular portion of the chain corresponds to Leu421–Gln433. A helical membrane pass occupies residues Trp434–Tyr454. At Gly455 to Pro508 the chain is on the cytoplasmic side. Over residues Glu476–Pro485 the composition is skewed to basic and acidic residues. Residues Glu476 to Pro508 form a disordered region.

It belongs to the G-protein coupled receptor 1 family.

It is found in the cell membrane. Its function is as follows. Orphan receptor. The chain is Probable G-protein coupled receptor 101 (GPR101) from Homo sapiens (Human).